The sequence spans 351 residues: Porphobilinogen deaminase (351 aa).

C242 carries the post-translational modification S-(dipyrrolylmethanemethyl)cysteine.

Belongs to the HMBS family. In terms of assembly, monomer. The cofactor is dipyrromethane.

It catalyses the reaction 4 porphobilinogen + H2O = hydroxymethylbilane + 4 NH4(+). The protein operates within porphyrin-containing compound metabolism; protoporphyrin-IX biosynthesis; coproporphyrinogen-III from 5-aminolevulinate: step 2/4. In terms of biological role, tetrapolymerization of the monopyrrole PBG into the hydroxymethylbilane pre-uroporphyrinogen in several discrete steps. This is Porphobilinogen deaminase from Rickettsia rickettsii (strain Sheila Smith).